The sequence spans 628 residues: Alpha-L-arabinofuranosidase A (628 aa).

The signal sequence occupies residues Met1–Gly25. N-linked (GlcNAc...) asparagine glycans are attached at residues Asn36, Asn51, Asn74, Asn152, Asn171, Asn260, Asn359, and Asn493.

It belongs to the glycosyl hydrolase 51 family.

It localises to the secreted. The enzyme catalyses Hydrolysis of terminal non-reducing alpha-L-arabinofuranoside residues in alpha-L-arabinosides.. It functions in the pathway glycan metabolism; L-arabinan degradation. In terms of biological role, alpha-L-arabinofuranosidase involved in the degradation of arabinoxylan, a major component of plant hemicellulose. Acts only on small linear 1,5-alpha-linked L-arabinofuranosyl oligosaccharides. This is Alpha-L-arabinofuranosidase A (abfA) from Aspergillus kawachii (strain NBRC 4308) (White koji mold).